Here is a 79-residue protein sequence, read N- to C-terminus: CDC42 small effector protein 1-B (79 aa).

2 S-palmitoyl cysteine lipidation sites follow: C10 and C11. Positions 30–43 constitute a CRIB domain; sequence IGEPMNFVHLTHIG. Positions 41–79 are disordered; it reads HIGSGDMGASDGLPKAGTVQEQMRSKCGRDRQWSNSRVL. Over residues 63–72 the composition is skewed to basic and acidic residues; it reads MRSKCGRDRQ.

This sequence belongs to the CDC42SE/SPEC family.

It is found in the cytoplasm. The protein localises to the cytoskeleton. It localises to the cell membrane. Its function is as follows. Probably involved in the organization of the actin cytoskeleton by acting downstream of CDC42, inducing actin filament assembly. In Xenopus laevis (African clawed frog), this protein is CDC42 small effector protein 1-B (cdc42se1-b).